The sequence spans 242 residues: tRNA1(Val) (adenine(37)-N6)-methyltransferase (242 aa).

It belongs to the methyltransferase superfamily. tRNA (adenine-N(6)-)-methyltransferase family.

It is found in the cytoplasm. The enzyme catalyses adenosine(37) in tRNA1(Val) + S-adenosyl-L-methionine = N(6)-methyladenosine(37) in tRNA1(Val) + S-adenosyl-L-homocysteine + H(+). Specifically methylates the adenine in position 37 of tRNA(1)(Val) (anticodon cmo5UAC). The sequence is that of tRNA1(Val) (adenine(37)-N6)-methyltransferase from Mannheimia succiniciproducens (strain KCTC 0769BP / MBEL55E).